Here is a 371-residue protein sequence, read N- to C-terminus: Cytochrome b (371 aa).

4 helical membrane-spanning segments follow: residues 25-45 (FGSMLLICLTLQIMTGFFLAI), 69-90 (WIMQNLHTIGASMFFICIYTHI), 105-125 (WLSGTTLLITLMATAFFGYVL), and 170-190 (FFALHFIIPFAIISLSSIHII). Residues H75 and H89 each coordinate heme b. 2 residues coordinate heme b: H174 and H188. Residue H193 coordinates a ubiquinone. The next 4 helical transmembrane spans lie at 218–238 (YKDTLTSTFMLITLFIILSFT), 280–300 (LGGTLALLMSVIILTTMPFTH), 312–332 (LAQTMFWMLIATFITITWTAS), and 339–358 (FIIISQTTSIFYFSFFIMNP).

It belongs to the cytochrome b family. In terms of assembly, the cytochrome bc1 complex contains 3 respiratory subunits (MT-CYB, CYC1 and UQCRFS1), 2 core proteins (UQCRC1 and UQCRC2) and probably 6 low-molecular weight proteins. Heme b is required as a cofactor.

Its subcellular location is the mitochondrion inner membrane. Functionally, component of the ubiquinol-cytochrome c reductase complex (complex III or cytochrome b-c1 complex) that is part of the mitochondrial respiratory chain. The b-c1 complex mediates electron transfer from ubiquinol to cytochrome c. Contributes to the generation of a proton gradient across the mitochondrial membrane that is then used for ATP synthesis. The chain is Cytochrome b (MT-CYB) from Sinomicrurus macclellandi (Macclelland's coral snake).